Reading from the N-terminus, the 344-residue chain is Phosphate acyltransferase (344 aa).

It belongs to the PlsX family. As to quaternary structure, homodimer. Probably interacts with PlsY.

The protein resides in the cytoplasm. It catalyses the reaction a fatty acyl-[ACP] + phosphate = an acyl phosphate + holo-[ACP]. Its pathway is lipid metabolism; phospholipid metabolism. Catalyzes the reversible formation of acyl-phosphate (acyl-PO(4)) from acyl-[acyl-carrier-protein] (acyl-ACP). This enzyme utilizes acyl-ACP as fatty acyl donor, but not acyl-CoA. The chain is Phosphate acyltransferase from Acaryochloris marina (strain MBIC 11017).